Here is a 385-residue protein sequence, read N- to C-terminus: Chaperone protein DnaJ (385 aa).

Positions 3–68 (DYYEILGVTR…QKRAAYDRFG (66 aa)) constitute a J domain. Residues 135–213 (GAEVEITVPA…CHGHGQVRRE (79 aa)) form a CR-type zinc finger. The Zn(2+) site is built by cysteine 148, cysteine 151, cysteine 165, cysteine 168, cysteine 187, cysteine 190, cysteine 201, and cysteine 204. CXXCXGXG motif repeat units lie at residues 148–155 (CEVCEGSG), 165–172 (CGTCGGAG), 187–194 (CPRCGGSG), and 201–208 (CSNCHGHG).

It belongs to the DnaJ family. As to quaternary structure, homodimer. The cofactor is Zn(2+).

Its subcellular location is the cytoplasm. Functionally, participates actively in the response to hyperosmotic and heat shock by preventing the aggregation of stress-denatured proteins and by disaggregating proteins, also in an autonomous, DnaK-independent fashion. Unfolded proteins bind initially to DnaJ; upon interaction with the DnaJ-bound protein, DnaK hydrolyzes its bound ATP, resulting in the formation of a stable complex. GrpE releases ADP from DnaK; ATP binding to DnaK triggers the release of the substrate protein, thus completing the reaction cycle. Several rounds of ATP-dependent interactions between DnaJ, DnaK and GrpE are required for fully efficient folding. Also involved, together with DnaK and GrpE, in the DNA replication of plasmids through activation of initiation proteins. The sequence is that of Chaperone protein DnaJ from Caulobacter vibrioides (strain ATCC 19089 / CIP 103742 / CB 15) (Caulobacter crescentus).